Reading from the N-terminus, the 433-residue chain is Serine hydroxymethyltransferase (433 aa).

(6S)-5,6,7,8-tetrahydrofolate contacts are provided by residues leucine 127 and 131 to 133 (GHL). Lysine 236 is modified (N6-(pyridoxal phosphate)lysine).

It belongs to the SHMT family. Homodimer. Pyridoxal 5'-phosphate serves as cofactor.

It localises to the cytoplasm. It catalyses the reaction (6R)-5,10-methylene-5,6,7,8-tetrahydrofolate + glycine + H2O = (6S)-5,6,7,8-tetrahydrofolate + L-serine. Its pathway is one-carbon metabolism; tetrahydrofolate interconversion. It functions in the pathway amino-acid biosynthesis; glycine biosynthesis; glycine from L-serine: step 1/1. Catalyzes the reversible interconversion of serine and glycine with tetrahydrofolate (THF) serving as the one-carbon carrier. This reaction serves as the major source of one-carbon groups required for the biosynthesis of purines, thymidylate, methionine, and other important biomolecules. Also exhibits THF-independent aldolase activity toward beta-hydroxyamino acids, producing glycine and aldehydes, via a retro-aldol mechanism. The chain is Serine hydroxymethyltransferase from Corynebacterium urealyticum (strain ATCC 43042 / DSM 7109).